We begin with the raw amino-acid sequence, 329 residues long: ADP-L-glycero-D-manno-heptose-6-epimerase (329 aa).

NADP(+) contacts are provided by residues F10 to I11, D31 to D32, K38, K53, Q74 to S78, and N91. The Proton acceptor role is filled by Y138. An NADP(+)-binding site is contributed by K142. N167 serves as a coordination point for substrate. V168 and K176 together coordinate NADP(+). K176 (proton acceptor) is an active-site residue. Substrate contacts are provided by residues R178, H185, F199–W202, R212, and Y291.

The protein belongs to the NAD(P)-dependent epimerase/dehydratase family. HldD subfamily. As to quaternary structure, homopentamer. Requires NADP(+) as cofactor.

It catalyses the reaction ADP-D-glycero-beta-D-manno-heptose = ADP-L-glycero-beta-D-manno-heptose. It participates in nucleotide-sugar biosynthesis; ADP-L-glycero-beta-D-manno-heptose biosynthesis; ADP-L-glycero-beta-D-manno-heptose from D-glycero-beta-D-manno-heptose 7-phosphate: step 4/4. The protein operates within bacterial outer membrane biogenesis; LPS core biosynthesis. Its function is as follows. Catalyzes the interconversion between ADP-D-glycero-beta-D-manno-heptose and ADP-L-glycero-beta-D-manno-heptose via an epimerization at carbon 6 of the heptose. This chain is ADP-L-glycero-D-manno-heptose-6-epimerase, found in Bordetella parapertussis (strain 12822 / ATCC BAA-587 / NCTC 13253).